We begin with the raw amino-acid sequence, 327 residues long: Annexin A8 (327 aa).

4 Annexin repeats span residues 21-92 (FNPD…ALMY), 93-164 (PPYR…CLLQ), 177-249 (GLAL…TVVK), and 253-324 (NLHG…NLVG). Positions 266, 268, 270, and 310 each coordinate Ca(2+).

The protein belongs to the annexin family.

Its function is as follows. This protein is an anticoagulant protein that acts as an indirect inhibitor of the thromboplastin-specific complex, which is involved in the blood coagulation cascade. The sequence is that of Annexin A8 (ANXA8) from Bos taurus (Bovine).